A 135-amino-acid polypeptide reads, in one-letter code: Sex-regulated protein janus-A (135 aa).

A substrate-binding site is contributed by K37. Residue H63 is the Proton acceptor of the active site. 104 to 106 lines the substrate pocket; the sequence is SQG.

It belongs to the janus family.

JanA and janB regulate somatic sex differentiation. The polypeptide is Sex-regulated protein janus-A (janA) (Drosophila orena (Fruit fly)).